A 319-amino-acid polypeptide reads, in one-letter code: Putative peptide permease protein BOV_A0351 (319 aa).

The next 6 membrane-spanning stretches (helical) occupy residues 9–29, 102–122, 138–158, 182–202, 242–262, and 284–304; these read LLIG…LLQL, LLLM…TGII, LALL…LYVF, LLRH…ALIM, LPVV…AIFI, and YPVI…VNIL. The region spanning 98–305 is the ABC transmembrane type-1 domain; sequence IGPTLLLMAA…ACVIIVNILT (208 aa).

The protein belongs to the binding-protein-dependent transport system permease family. As to quaternary structure, the complex is composed of two ATP-binding proteins (BOV_A0347 and BOV_A0348), two transmembrane proteins (BOV_A0350 and BOV_A0351) and a solute-binding protein (BOV_A0352).

It localises to the cell inner membrane. Functionally, probably part of an ABC transporter complex that could be involved in peptide import. Probably responsible for the translocation of the substrate across the membrane. The sequence is that of Putative peptide permease protein BOV_A0351 from Brucella ovis (strain ATCC 25840 / 63/290 / NCTC 10512).